Reading from the N-terminus, the 493-residue chain is Amphoterin-induced protein 1 (493 aa).

The N-terminal stretch at 1–27 (MQPQRDLRGLWLLLLSLFLLLFEVARA) is a signal peptide. One can recognise an LRRNT domain in the interval 28 to 61 (GRPVVSCPANCLCASNILSCSKQQLPNVPQSLPG). At 28–372 (GRPVVSCPAN…LHGHHDTLNT (345 aa)) the chain is on the extracellular side. Intrachain disulfides connect Cys-34-Cys-40 and Cys-38-Cys-47. 6 LRR repeats span residues 62–83 (YTALLDLSHNNLSRLKAEWTPT), 87–108 (NLHSLLLSHNHLNFISSEAFVP), 111–132 (NLRYLDLSSNHLHTLDEFLFSG), 135–156 (ALEVLLLYNNHIVVVDRNAFED), 159–179 (QLQKLYLSQNMISRFPLELIK), and 186–206 (KLTLLDLSSNKLKKLPLTDLQ). A glycan (N-linked (GlcNAc...) asparagine) is linked at Asn-72. One can recognise an LRRCT domain in the interval 221 to 272 (NPLECDCKLYQLFSHWQYRQLSSVMDFQEDLYCVHSKKLHNVFSLDFFNCSE). Intrachain disulfides connect Cys-225–Cys-253, Cys-227–Cys-270, and Cys-290–Cys-341. N-linked (GlcNAc...) asparagine glycans are attached at residues Asn-269, Asn-315, Asn-349, and Asn-360. Residues 269–353 (NCSEYKESAW…MGETFNETLS (85 aa)) form the Ig-like C2-type domain. A helical membrane pass occupies residues 373–393 (AYTTLVGCILSVVLVLIYLYL). At 394–493 (TPCRCWCRGV…SVFSDTPIVV (100 aa)) the chain is on the cytoplasmic side. Residues 405–493 (KPSSHQGDSL…SVFSDTPIVV (89 aa)) are disordered. The segment covering 408 to 424 (SHQGDSLSSSMLSTTPN) has biased composition (polar residues). Positions 431-442 (GDKDDGFDRRVA) are enriched in basic and acidic residues. Phosphoserine is present on residues Ser-477 and Ser-481.

It belongs to the immunoglobulin superfamily. AMIGO family. In terms of assembly, homodimer, and heterodimer with AMIGO2 and AMIGO3. Interacts with KCNB1.

Its subcellular location is the cell membrane. The protein resides in the perikaryon. It localises to the cell projection. It is found in the dendrite. The protein localises to the axon. Promotes growth and fasciculation of neurites from cultured hippocampal neurons. May be involved in fasciculation as well as myelination of developing neural axons. May have a role in regeneration as well as neural plasticity in the adult nervous system. May mediate homophilic as well as heterophilic cell-cell interaction and contribute to signal transduction through its intracellular domain. Assembled with KCNB1 modulates the gating characteristics of the delayed rectifier voltage-dependent potassium channel KCNB1. The chain is Amphoterin-induced protein 1 from Rattus norvegicus (Rat).